The primary structure comprises 200 residues: ADP-ribosylation factor-like protein 4D (200 aa).

The N-myristoyl glycine moiety is linked to residue Gly2. Residues 27–34, 75–79, and 134–137 each bind GTP; these read GLDSAGKT, DVGGQ, and NKQD.

Belongs to the small GTPase superfamily. Arf family. In terms of assembly, interacts with CYTH2; the interaction is direct and ARL4D GTP-dependent. Does not interact with ARL4D.

Its subcellular location is the nucleus. It is found in the nucleolus. It localises to the cell membrane. The protein resides in the cytoplasm. Its function is as follows. Small GTP-binding protein which cycles between an inactive GDP-bound and an active GTP-bound form, and the rate of cycling is regulated by guanine nucleotide exchange factors (GEF) and GTPase-activating proteins (GAP). GTP-binding protein that does not act as an allosteric activator of the cholera toxin catalytic subunit. Recruits CYTH1, CYTH2, CYTH3 and CYTH4 to the plasma membrane in GDP-bound form. This chain is ADP-ribosylation factor-like protein 4D (ARL4D), found in Bos taurus (Bovine).